A 1212-amino-acid polypeptide reads, in one-letter code: Myosin-1 (1212 aa).

A disordered region spans residues 1–35 (MGITRRGKDKAAAGQAVAGGASGGRARPKKATFET). A Myosin motor domain is found at 41–715 (VGVSDLTLLS…TLFALEHMRD (675 aa)). Position 134–141 (134–141 (GESGAGKT)) interacts with ATP. Residues 405 to 487 (SVGILDIYGF…PGVFSALKDA (83 aa)) are actin-binding. IQ domains are found at residues 719-739 (HNMA…RAES) and 740-765 (ATRI…HGHR). A TH1 domain is found at 773 to 962 (RRRMSILGSR…AVHTQQGEPP (190 aa)). Disordered regions lie at residues 947 to 1064 (DFYK…APPA) and 1115 to 1212 (PAAY…DDDW). Positions 954 to 966 (VHTQQGEPPNSVS) are enriched in polar residues. Composition is skewed to low complexity over residues 987 to 998 (RPGGPNGRPARG) and 1008 to 1052 (PGGA…ASVR). A compositionally biased stretch (pro residues) spans 1053–1062 (APPPPPPAAP). The 60-residue stretch at 1065-1124 (KAKIMAKVLYDFAGQKENEMSIKEGDLIEIVQKENNGWWLAKSGNQQAWVPAAYVEEQKQ) folds into the SH3 domain. Residues 1125-1140 (APPPVAASRPPPPAPP) are compositionally biased toward pro residues. Residues 1171 to 1190 (MSLNGSDGSRSNTPTPSLGN) show a composition bias toward polar residues.

This sequence belongs to the TRAFAC class myosin-kinesin ATPase superfamily. Myosin family.

It is found in the cytoplasm. Its subcellular location is the cytoskeleton. The protein resides in the actin patch. Its function is as follows. Type-I myosin implicated in the organization of the actin cytoskeleton. Required for proper actin cytoskeleton polarization. At the cell cortex, assembles in patch-like structures together with proteins from the actin-polymerizing machinery and promotes actin assembly. Functions as actin nucleation-promoting factor (NPF) for the Arp2/3 complex. The protein is Myosin-1 (MYO1) of Pyricularia oryzae (strain 70-15 / ATCC MYA-4617 / FGSC 8958) (Rice blast fungus).